Consider the following 354-residue polypeptide: Opsin-1, short-wave-sensitive 2 (354 aa).

The Extracellular portion of the chain corresponds to 1–43 (MKQQQQTPELFEDFHMPITLDVSNISAYSPFLVPQDHLGHSGV). N-linked (GlcNAc...) asparagine glycosylation is present at Asn-24. The helical transmembrane segment at 44-68 (FMGMSAFMLFLFIAGTAINVLTIVC) threads the bilayer. Residues 69 to 80 (TIQYKKLRSHLN) lie on the Cytoplasmic side of the membrane. A helical membrane pass occupies residues 81–106 (YILVNLAISNLWVSVFGSSVAFYAFY). Residues 107–120 (KKYFVFGPIGCKIE) lie on the Extracellular side of the membrane. A disulfide bridge connects residues Cys-117 and Cys-194. Residues 121-140 (GFTSTIGGMVSLWSLAVVAL) traverse the membrane as a helical segment. Topologically, residues 141–159 (ERWLVICKPLGNFTFKTPH) are cytoplasmic. The helical transmembrane segment at 160-183 (AIAGCILPWCMALAAGLPPLLGWS) threads the bilayer. At 184 to 209 (RYIPEGLQCSCGPDWYTTNNKFNNES) the chain is on the extracellular side. N-linked (GlcNAc...) asparagine glycosylation is present at Asn-207. The chain crosses the membrane as a helical span at residues 210-237 (YVMFLFCFCFAVPFSTIVFCYGQLLITL). Topologically, residues 238 to 259 (KLAAKAQADSASTQKAEREVTK) are cytoplasmic. A helical transmembrane segment spans residues 260-283 (MVVVMVFGFLICWGPYAIFAIWVV). Topologically, residues 284–291 (SNRGAPFD) are extracellular. Residues 292-316 (LRLATIPSCLCKASTVYNPVIYVLM) form a helical membrane-spanning segment. Lys-303 carries the post-translational modification N6-(retinylidene)lysine. Topologically, residues 317–354 (NKQFRSCMMKMVFNKNIEEDEASSSSQVTQVSSVAPEK) are cytoplasmic.

This sequence belongs to the G-protein coupled receptor 1 family. Opsin subfamily. In terms of processing, phosphorylated on some or all of the serine and threonine residues present in the C-terminal region. As to expression, retinal long single cone outer segments.

The protein localises to the membrane. Visual pigments are the light-absorbing molecules that mediate vision. They consist of an apoprotein, opsin, covalently linked to cis-retinal. In Danio rerio (Zebrafish), this protein is Opsin-1, short-wave-sensitive 2 (opn1sw2).